Here is a 46-residue protein sequence, read N- to C-terminus: Light-harvesting protein B800/850/890 alpha-1 chain (46 aa).

The Cytoplasmic portion of the chain corresponds to 1-12 (MWRLWKLYDPRR). The chain crosses the membrane as a helical span at residues 13 to 33 (VLIGIFSWLAVLALVIHFILL). His29 provides a ligand contact to a bacteriochlorophyll. Residues 34–46 (STDRFNWVGGAAN) lie on the Periplasmic side of the membrane.

The protein belongs to the antenna complex alpha subunit family. As to quaternary structure, the core complex is formed by different alpha and beta chains, binding bacteriochlorophyll molecules, and arranged most probably in tetrameric structures disposed around the reaction center. The non-pigmented gamma chains may constitute additional components.

The protein resides in the cell inner membrane. Functionally, antenna complexes are light-harvesting systems, which transfer the excitation energy to the reaction centers. The polypeptide is Light-harvesting protein B800/850/890 alpha-1 chain (Halorhodospira halophila (strain DSM 244 / SL1) (Ectothiorhodospira halophila (strain DSM 244 / SL1))).